The chain runs to 146 residues: NADH-quinone oxidoreductase subunit A (146 aa).

Transmembrane regions (helical) follow at residues 14–34 (FAVF…GAFF), 66–86 (FYLV…LYAW), and 96–116 (VGFI…VYLV).

This sequence belongs to the complex I subunit 3 family. NDH-1 is composed of 13 different subunits. Subunits NuoA, H, J, K, L, M, N constitute the membrane sector of the complex.

It localises to the cell inner membrane. The enzyme catalyses a quinone + NADH + 5 H(+)(in) = a quinol + NAD(+) + 4 H(+)(out). Functionally, NDH-1 shuttles electrons from NADH, via FMN and iron-sulfur (Fe-S) centers, to quinones in the respiratory chain. The immediate electron acceptor for the enzyme in this species is believed to be ubiquinone. Couples the redox reaction to proton translocation (for every two electrons transferred, four hydrogen ions are translocated across the cytoplasmic membrane), and thus conserves the redox energy in a proton gradient. The polypeptide is NADH-quinone oxidoreductase subunit A (Serratia proteamaculans (strain 568)).